The chain runs to 413 residues: Gamma-glutamyl phosphate reductase (413 aa).

This sequence belongs to the gamma-glutamyl phosphate reductase family.

The protein localises to the cytoplasm. The catalysed reaction is L-glutamate 5-semialdehyde + phosphate + NADP(+) = L-glutamyl 5-phosphate + NADPH + H(+). It functions in the pathway amino-acid biosynthesis; L-proline biosynthesis; L-glutamate 5-semialdehyde from L-glutamate: step 2/2. Its function is as follows. Catalyzes the NADPH-dependent reduction of L-glutamate 5-phosphate into L-glutamate 5-semialdehyde and phosphate. The product spontaneously undergoes cyclization to form 1-pyrroline-5-carboxylate. The protein is Gamma-glutamyl phosphate reductase of Leuconostoc mesenteroides subsp. mesenteroides (strain ATCC 8293 / DSM 20343 / BCRC 11652 / CCM 1803 / JCM 6124 / NCDO 523 / NBRC 100496 / NCIMB 8023 / NCTC 12954 / NRRL B-1118 / 37Y).